A 276-amino-acid polypeptide reads, in one-letter code: Diaminopimelate epimerase (276 aa).

Residues Asn13, Gln46, and Asn66 each contribute to the substrate site. Residue Cys75 is the Proton donor of the active site. Residues 76–77, Asn159, Asn192, and 210–211 contribute to the substrate site; these read GN and ER. Cys219 serves as the catalytic Proton acceptor. Residue 220–221 participates in substrate binding; the sequence is GS.

The protein belongs to the diaminopimelate epimerase family. In terms of assembly, homodimer.

Its subcellular location is the cytoplasm. The enzyme catalyses (2S,6S)-2,6-diaminopimelate = meso-2,6-diaminopimelate. It functions in the pathway amino-acid biosynthesis; L-lysine biosynthesis via DAP pathway; DL-2,6-diaminopimelate from LL-2,6-diaminopimelate: step 1/1. Catalyzes the stereoinversion of LL-2,6-diaminopimelate (L,L-DAP) to meso-diaminopimelate (meso-DAP), a precursor of L-lysine and an essential component of the bacterial peptidoglycan. This Vibrio atlanticus (strain LGP32) (Vibrio splendidus (strain Mel32)) protein is Diaminopimelate epimerase.